Here is a 508-residue protein sequence, read N- to C-terminus: MEEYQVHLELDRSRQQDFLYPLIFREYIYGLAYGHDLNSSILVENGGYDNKSSLLIVKRLITRMYQQNHFLFSANDSNKNPFWGYNKNLYSQIISEGFAVVVEIPLSLQLSSSLEEAEIVKSYNNLRSIHSIFPFFEDKFTYLNYVSDVRIPYPIHLEILVQTLRYWVKDAPFFHLVRLFLYEYCNWNSLITPKKSISTFSKSNPRFLLFLYNFYVYEYESIFLFLRNKSSHLRLPSFSVLFERIYFYAKIEHQHLVEVFAKDFSSTLLFFKDPFIHYVRYQGKSILASKNAPFLMNKWKYYFILLWQCHFYVWSQPGAIHITQLSEHSFDFLGYFSNVRLNASVVRSQMLENSFIIEILMKKLDTIVPIILLIRSLAKAKFCNVLGHPISKPVWSDSSDFDIIDRFLRICRNLSHYYNGSSKKKSLYRIKYILRLSCIKTLARKHKSTVRAFLKGLGSEELLEEFFTEEEEILSLIFPRVSSTLQRLYRGRIWYLDIIFINDLVNRE.

Belongs to the intron maturase 2 family. MatK subfamily.

It localises to the plastid. The protein localises to the chloroplast. Usually encoded in the trnK tRNA gene intron. Probably assists in splicing its own and other chloroplast group II introns. This chain is Maturase K, found in Amburana cearensis (Cerejeira).